The following is a 379-amino-acid chain: Chaperone protein DnaJ (379 aa).

The region spanning 5 to 70 is the J domain; that stretch reads DYYEVLGVSR…QKRAAYDQYG (66 aa). A CR-type zinc finger spans residues 134 to 212; it reads GVTKEIRIPT…CHGHGRVEKS (79 aa). Zn(2+) is bound by residues Cys147, Cys150, Cys164, Cys167, Cys186, Cys189, Cys200, and Cys203. CXXCXGXG motif repeat units lie at residues 147–154, 164–171, 186–193, and 200–207; these read CDVCHGSG, CPTCHGAG, CPHCHGRG, and CNKCHGHG.

This sequence belongs to the DnaJ family. In terms of assembly, homodimer. Requires Zn(2+) as cofactor.

The protein resides in the cytoplasm. Its function is as follows. Participates actively in the response to hyperosmotic and heat shock by preventing the aggregation of stress-denatured proteins and by disaggregating proteins, also in an autonomous, DnaK-independent fashion. Unfolded proteins bind initially to DnaJ; upon interaction with the DnaJ-bound protein, DnaK hydrolyzes its bound ATP, resulting in the formation of a stable complex. GrpE releases ADP from DnaK; ATP binding to DnaK triggers the release of the substrate protein, thus completing the reaction cycle. Several rounds of ATP-dependent interactions between DnaJ, DnaK and GrpE are required for fully efficient folding. Also involved, together with DnaK and GrpE, in the DNA replication of plasmids through activation of initiation proteins. The chain is Chaperone protein DnaJ from Yersinia pestis bv. Antiqua (strain Antiqua).